A 473-amino-acid chain; its full sequence is Sensor histidine kinase GtrS (473 aa).

At 1 to 8 (MPRSLLGR) the chain is on the cytoplasmic side. Residues 9-29 (MLLLTLLAVLVAQGLSSLFWL) traverse the membrane as a helical segment. The Periplasmic portion of the chain corresponds to 30–197 (SHLRSSQREG…LEPEGLQPQQ (168 aa)). A helical transmembrane segment spans residues 198–218 (VLSIVFTSLLLLLFTGLLMHW). In terms of domain architecture, HAMP spans 217–269 (HWQSRPLKRLARAARDLALGSPSAALEERGASELVEVARAFNTMHERIDRYLN). Topologically, residues 219 to 473 (QSRPLKRLAR…SLRLPRLGLE (255 aa)) are cytoplasmic. The Histidine kinase domain maps to 277–471 (AISHDLRTPI…RVSLRLPRLG (195 aa)). His280 bears the Phosphohistidine; by autocatalysis mark.

Post-translationally, autophosphorylated.

The protein localises to the cell inner membrane. It carries out the reaction ATP + protein L-histidine = ADP + protein N-phospho-L-histidine.. In terms of biological role, member of the two-component regulatory system GtrS/GltR involved in the regulation of glucose metabolism and transport, as well as regulation of the exotoxin A gene expression. GtrS recognizes and binds 2-ketogluconate and 6-phosphogluconate via its sensor domain, which accelerates GtrS autophosphorylation and concomitant transphosphorylation and regulation of the response regulator GltR. Functionally, plays a key role during bacteria-host interactions and is required for optimal colonization and dissemination in a mouse model of infection. Contributes to modulation of the type III secretion system (T3SS) in response to host cells via the regulation of the OprB transport system. This Pseudomonas aeruginosa (strain ATCC 15692 / DSM 22644 / CIP 104116 / JCM 14847 / LMG 12228 / 1C / PRS 101 / PAO1) protein is Sensor histidine kinase GtrS.